The following is a 98-amino-acid chain: Small ribosomal subunit protein bS6c (98 aa).

It belongs to the bacterial ribosomal protein bS6 family.

The protein resides in the plastid. It localises to the chloroplast. In terms of biological role, binds together with bS18 to 16S ribosomal RNA. The chain is Small ribosomal subunit protein bS6c from Phaeodactylum tricornutum (strain CCAP 1055/1).